Here is a 373-residue protein sequence, read N- to C-terminus: 3 beta-hydroxysteroid dehydrogenase/Delta 5--&gt;4-isomerase (373 aa).

Y155 functions as the Proton acceptor in the catalytic mechanism. K159 is an NAD(+) binding site. A helical membrane pass occupies residues 288-308 (IFLKYWLAFLLEIVSFLLSPI).

This sequence belongs to the 3-beta-HSD family.

Its subcellular location is the endoplasmic reticulum membrane. It is found in the mitochondrion membrane. It catalyses the reaction a 3beta-hydroxy-Delta(5)-steroid + NAD(+) = a 3-oxo-Delta(5)-steroid + NADH + H(+). It carries out the reaction a 3-oxo-Delta(5)-steroid = a 3-oxo-Delta(4)-steroid. Its pathway is lipid metabolism; steroid biosynthesis. Functionally, 3-beta-HSD is a bifunctional enzyme, that catalyzes the oxidative conversion of Delta(5)-ene-3-beta-hydroxy steroid, and the oxidative conversion of ketosteroids. The 3-beta-HSD enzymatic system plays a crucial role in the biosynthesis of all classes of hormonal steroids. The polypeptide is 3 beta-hydroxysteroid dehydrogenase/Delta 5--&gt;4-isomerase (HSD3B) (Equus caballus (Horse)).